A 59-amino-acid polypeptide reads, in one-letter code: Large ribosomal subunit protein bL32 (59 aa).

Positions 1–59 (MAVQQNRKTRSKRGMRRSHDALSAAALSTDATTGEVHRRHHVSPDGFYRGKQVVEARDE) are disordered. A compositionally biased stretch (basic residues) spans 7-16 (RKTRSKRGMR). Positions 21–33 (ALSAAALSTDATT) are enriched in low complexity.

The protein belongs to the bacterial ribosomal protein bL32 family.

This chain is Large ribosomal subunit protein bL32, found in Marinobacter nauticus (strain ATCC 700491 / DSM 11845 / VT8) (Marinobacter aquaeolei).